The following is a 712-amino-acid chain: Diacylglycerol kinase 2 (712 aa).

Phorbol-ester/DAG-type zinc fingers lie at residues 72–133 (HHQW…AKDC) and 145–208 (RHHW…GDAC). Residues 338–479 (PDARPLLVFI…RWSVKIVEES (142 aa)) enclose the DAGKc domain.

This sequence belongs to the eukaryotic diacylglycerol kinase family. Monomer. As to expression, expressed in rosette and cauline leaves, flowers, siliques and roots. Highly expressed in young leaves and at lower levels in older leaves. In young seedlings, expressed at the root-shoot junction zone and vascular bundles of the cotyledons. In older plants, expressed in root tip, central cylinder, root hair, leaf mesophyll cells and guard cells, sepals, filaments of the anthers, stigma, valves of young and early adult siliques and hilum of seeds.

The protein localises to the endoplasmic reticulum. The enzyme catalyses a 1,2-diacyl-sn-glycerol + ATP = a 1,2-diacyl-sn-glycero-3-phosphate + ADP + H(+). It carries out the reaction 1-octadecanoyl-2-(5Z,8Z,11Z,14Z-eicosatetraenoyl)-sn-glycerol + ATP = 1-octadecanoyl-2-(5Z,8Z,11Z,14Z-eicosatetraenoyl)-sn-glycero-3-phosphate + ADP + H(+). The catalysed reaction is 1,2-di-(9Z-octadecenoyl)-sn-glycerol + ATP = 1,2-di-(9Z-octadecenoyl)-sn-glycero-3-phosphate + ADP + H(+). Functionally, phosphorylates the second messenger diacylglycerol (DAG) to generate phosphatidic acid (PA), another important signaling molecule. PA is required for plant development and responses to abiotic stress and pathogen attack. May be involved in the accumulation of PA during cold stress. Involved in response to freezing stress by modulating the accumulation of PA. Exhibits high specificity for the unsaturated DAG analogs 1-stearoyl-2-arachidonoyl-sn-glycerol (1,2-SAG) and 1,2-dioleoyl-sn-glycerol (1,2-DOG). Exhibits high specificity for 1-palmitoyl, 2-oleoyl-sn-glycerol (1,2 POG), 1-stearoyl, 2-linoleoyl-sn-glycerol (1,2-SLG) and 1-oleoyl, 2-palmitoyl-sn-glycerol (1,2-OPG). Has almost no activity toward 1,2-dioctanoyl-sn-glycerol (1,2-DOCG), 1,2-dipalmitoyl-sn-glycerol (1,2-DPG), 1,2-dimyristoyl-sn-glycerol (1,2-DMG) and 1-oleoyl-2-acetyl-sn-glycerol (1,2-OAG). Functions together with DGK4 in male gametophyte development and biosynthesis of phosphatidylglycerol and phosphatidylinositol in the endoplasmic reticulum (ER). Involved in PA production for pollen grain growth, as well as leaf and root growth. The polypeptide is Diacylglycerol kinase 2 (Arabidopsis thaliana (Mouse-ear cress)).